Here is an 84-residue protein sequence, read N- to C-terminus: Small ribosomal subunit protein bS20 (84 aa).

The disordered stretch occupies residues 1–22 (MPAPTKRERQNRKRFERNRSVR). Positions 9–22 (RQNRKRFERNRSVR) are enriched in basic residues.

This sequence belongs to the bacterial ribosomal protein bS20 family.

Functionally, binds directly to 16S ribosomal RNA. This chain is Small ribosomal subunit protein bS20, found in Rubrobacter xylanophilus (strain DSM 9941 / JCM 11954 / NBRC 16129 / PRD-1).